The sequence spans 115 residues: Large ribosomal subunit protein bL19 (115 aa).

It belongs to the bacterial ribosomal protein bL19 family.

In terms of biological role, this protein is located at the 30S-50S ribosomal subunit interface and may play a role in the structure and function of the aminoacyl-tRNA binding site. This is Large ribosomal subunit protein bL19 from Buchnera aphidicola subsp. Cinara cedri (strain Cc).